The primary structure comprises 78 residues: Mu-conotoxin BuIIIB (78 aa).

The signal sequence occupies residues methionine 1–proline 22. Residues glutamine 23–arginine 51 constitute a propeptide that is removed on maturation. The disordered stretch occupies residues aspartate 26 to proline 46. Over residues proline 28 to aspartate 38 the composition is skewed to basic and acidic residues. Cystine bridges form between cysteine 56–cysteine 68, cysteine 57–cysteine 74, and cysteine 64–cysteine 75. A Cysteine amide modification is found at cysteine 75.

This sequence belongs to the conotoxin M superfamily. As to expression, expressed by the venom duct.

It is found in the secreted. Its function is as follows. Mu-conotoxins block voltage-gated sodium channels (Nav). This synthetic toxin potently blocks rNav1.4/SCN4A (Kd=0.34-3.6 nM), rNav1.2/SCN2A (Kd=13 nM), rNav1.3/SCN3A (Kd=200 nM), rNav1.1/SCN1A (Kd=360 nM), mNav1.6/SCN8A (IC(50)=1.8 uM), rNav1.5/SCN5A (IC(50)=9 uM), rNav1.6/SCN8A (IC(50)&gt;30 uM). It is noteworthy that the toxin is 50-fold more potent on mouse Nav1.6 than on rat Nav1.6. The block of SCN4A is very slowly reversible. The sequence is that of Mu-conotoxin BuIIIB from Conus bullatus (Bubble cone).